The sequence spans 254 residues: Sugar fermentation stimulation protein homolog (254 aa).

This sequence belongs to the SfsA family.

The chain is Sugar fermentation stimulation protein homolog from Synechococcus sp. (strain CC9605).